The chain runs to 150 residues: 1,4-dihydroxy-2-naphthoyl-CoA hydrolase (150 aa).

Residue D19 is part of the active site.

This sequence belongs to the 4-hydroxybenzoyl-CoA thioesterase family. DHNA-CoA hydrolase subfamily.

It carries out the reaction 1,4-dihydroxy-2-naphthoyl-CoA + H2O = 1,4-dihydroxy-2-naphthoate + CoA + H(+). The protein operates within cofactor biosynthesis; phylloquinone biosynthesis. It functions in the pathway quinol/quinone metabolism; 1,4-dihydroxy-2-naphthoate biosynthesis; 1,4-dihydroxy-2-naphthoate from chorismate: step 7/7. Its function is as follows. Catalyzes the hydrolysis of 1,4-dihydroxy-2-naphthoyl-CoA (DHNA-CoA) to 1,4-dihydroxy-2-naphthoate (DHNA), a reaction involved in phylloquinone (vitamin K1) biosynthesis. The chain is 1,4-dihydroxy-2-naphthoyl-CoA hydrolase from Prochlorococcus marinus subsp. pastoris (strain CCMP1986 / NIES-2087 / MED4).